The sequence spans 202 residues: 7-methyl-GTP pyrophosphatase (202 aa).

D70 acts as the Proton acceptor in catalysis.

This sequence belongs to the Maf family. YceF subfamily. Requires a divalent metal cation as cofactor.

It is found in the cytoplasm. The enzyme catalyses N(7)-methyl-GTP + H2O = N(7)-methyl-GMP + diphosphate + H(+). Its function is as follows. Nucleoside triphosphate pyrophosphatase that hydrolyzes 7-methyl-GTP (m(7)GTP). May have a dual role in cell division arrest and in preventing the incorporation of modified nucleotides into cellular nucleic acids. This chain is 7-methyl-GTP pyrophosphatase, found in Pseudoalteromonas translucida (strain TAC 125).